A 59-amino-acid chain; its full sequence is Potassium channel toxin alpha-KTx 4.7 (59 aa).

The signal sequence occupies residues 1–22 (MKAFYGILIIFILISMLDLSQQ). Intrachain disulfides connect Cys29–Cys50, Cys35–Cys55, and Cys39–Cys57. Residues 48-55 (GKCMNGKC) form an interaction with Ca(2+)-activated K(+) channels region.

It belongs to the short scorpion toxin superfamily. Potassium channel inhibitor family. Alpha-KTx 04 subfamily. Expressed by the venom gland.

The protein resides in the secreted. Functionally, potently blocks Kv1.1/KCNA1 (85%), Kv1.2/KCNA2 (91%), Kv1.3/KCNA3 (89%), Kv1.6/KCNA6 (94%), and Shaker (97%). The polypeptide is Potassium channel toxin alpha-KTx 4.7 (Tityus stigmurus (Brazilian scorpion)).